Reading from the N-terminus, the 60-residue chain is UPF0434 protein Ssed_2824 (60 aa).

It belongs to the UPF0434 family.

This is UPF0434 protein Ssed_2824 from Shewanella sediminis (strain HAW-EB3).